The sequence spans 244 residues: Type III pantothenate kinase (244 aa).

7 to 14 (DIGNTRLK) contacts ATP. Substrate is bound by residues Tyr-95 and 102–105 (GIDR). Catalysis depends on Asp-104, which acts as the Proton acceptor. Thr-126 contributes to the ATP binding site. Thr-177 is a binding site for substrate.

Belongs to the type III pantothenate kinase family. As to quaternary structure, homodimer. NH4(+) serves as cofactor. It depends on K(+) as a cofactor.

Its subcellular location is the cytoplasm. The catalysed reaction is (R)-pantothenate + ATP = (R)-4'-phosphopantothenate + ADP + H(+). It participates in cofactor biosynthesis; coenzyme A biosynthesis; CoA from (R)-pantothenate: step 1/5. Functionally, catalyzes the phosphorylation of pantothenate (Pan), the first step in CoA biosynthesis. This chain is Type III pantothenate kinase, found in Acinetobacter baumannii (strain ACICU).